Consider the following 81-residue polypeptide: Apolipoprotein C-I, acidic form (81 aa).

Residues 1–24 (MRLFLSLLVVVLSMVLKGPTPAQG) form the signal peptide.

Belongs to the apolipoprotein C1 family.

The protein resides in the secreted. This Macaca fascicularis (Crab-eating macaque) protein is Apolipoprotein C-I, acidic form (APOC1A).